Reading from the N-terminus, the 284-residue chain is Alpha-S1-casein (284 aa).

The signal sequence occupies residues 1-15 (MKLLILTCLVAAALA). 2 disordered regions span residues 21-44 (RRNAVSSQTQQENSSSEEQEIVKQ) and 78-111 (SSAEEQATASAQEDSSSSSSSSEESKDAIPSATE). Low complexity-rich tracts occupy residues 24-36 (AVSSQTQQENSSS) and 78-99 (SSAEEQATASAQEDSSSSSSSS). A phosphoserine mark is found at Ser79, Ser93, Ser94, Ser95, Ser96, Ser97, Ser98, and Ser99. A run of 10 repeats spans residues 138-143 (LLQQAS), 144-149 (LAQQAS), 150-155 (LAQQAS), 156-161 (LAQQAL), 162-167 (LAQQPS), 168-173 (LAQQAA), 174-179 (LAQQAS), 180-185 (LAQQAS), 186-191 (LAQQAS), and 192-197 (LAQKHH). The 10 X 6 AA tandem repeats stretch occupies residues 138-197 (LLQQASLAQQASLAQQASLAQQALLAQQPSLAQQAALAQQASLAQQASLAQQASLAQKHH).

Belongs to the alpha-casein family. In terms of tissue distribution, mammary gland specific. Secreted in milk.

It localises to the secreted. Important role in the capacity of milk to transport calcium phosphate. The protein is Alpha-S1-casein (Csn1s1) of Rattus norvegicus (Rat).